The chain runs to 625 residues: Phosphomethylpyrimidine synthase (625 aa).

Residues asparagine 230, methionine 259, tyrosine 288, histidine 324, 344–346 (SRG), 385–388 (DGLR), and glutamate 424 contribute to the substrate site. Histidine 428 contacts Zn(2+). Substrate is bound at residue tyrosine 451. Histidine 492 provides a ligand contact to Zn(2+). Positions 572, 575, and 580 each coordinate [4Fe-4S] cluster.

Belongs to the ThiC family. In terms of assembly, homodimer. Requires [4Fe-4S] cluster as cofactor.

The enzyme catalyses 5-amino-1-(5-phospho-beta-D-ribosyl)imidazole + S-adenosyl-L-methionine = 4-amino-2-methyl-5-(phosphooxymethyl)pyrimidine + CO + 5'-deoxyadenosine + formate + L-methionine + 3 H(+). The protein operates within cofactor biosynthesis; thiamine diphosphate biosynthesis. Its function is as follows. Catalyzes the synthesis of the hydroxymethylpyrimidine phosphate (HMP-P) moiety of thiamine from aminoimidazole ribotide (AIR) in a radical S-adenosyl-L-methionine (SAM)-dependent reaction. The chain is Phosphomethylpyrimidine synthase from Xanthomonas campestris pv. campestris (strain 8004).